We begin with the raw amino-acid sequence, 687 residues long: Protein 4.2 (687 aa).

G2 carries N-myristoyl glycine lipidation. The band 3 binding stretch occupies residues 31–39 (LFVRRGQPF). S247 is modified (phosphoserine).

The protein belongs to the transglutaminase superfamily. Transglutaminase family. As to quaternary structure, component of the ankyrin-1 complex in the erythrocyte, composed of ANK1, RHCE, RHAG, SLC4A1, EPB42, GYPA, GYPB and AQP1. Interacts with SLC4A1 (via the cytoplasmic domain); this interaction is mediated by the SLC4A1 Band 3-I dimer. Interacts with ANK1 (via ANK 1-13 repeats). Interacts with AQP1 (via the C-terminal).

It is found in the cell membrane. The protein resides in the cytoplasm. The protein localises to the cytoskeleton. Its function is as follows. Component of the ankyrin-1 complex, a multiprotein complex involved in the stability and shape of the erythrocyte membrane. This Bos taurus (Bovine) protein is Protein 4.2.